We begin with the raw amino-acid sequence, 316 residues long: Transaldolase (316 aa).

Residue Lys131 is the Schiff-base intermediate with substrate of the active site.

Belongs to the transaldolase family. Type 1 subfamily. In terms of assembly, homodimer.

It is found in the cytoplasm. The catalysed reaction is D-sedoheptulose 7-phosphate + D-glyceraldehyde 3-phosphate = D-erythrose 4-phosphate + beta-D-fructose 6-phosphate. The protein operates within carbohydrate degradation; pentose phosphate pathway; D-glyceraldehyde 3-phosphate and beta-D-fructose 6-phosphate from D-ribose 5-phosphate and D-xylulose 5-phosphate (non-oxidative stage): step 2/3. Functionally, transaldolase is important for the balance of metabolites in the pentose-phosphate pathway. The polypeptide is Transaldolase (Sodalis glossinidius (strain morsitans)).